A 767-amino-acid polypeptide reads, in one-letter code: Probable beta-glucosidase K (767 aa).

The N-linked (GlcNAc...) asparagine glycan is linked to N19. Residue D232 is part of the active site. N-linked (GlcNAc...) asparagine glycosylation is found at N324, N477, and N749. A PA14 domain is found at 405–552 (EGQPGLRMRF…DPERAIARAV (148 aa)). Positions 727-767 (LGRRGRSGSSPAVYRGRSNNVVNRTSHQGAQRISKGGFAAR) are disordered. A compositionally biased stretch (polar residues) spans 743 to 757 (RSNNVVNRTSHQGAQ).

Belongs to the glycosyl hydrolase 3 family.

It localises to the secreted. The catalysed reaction is Hydrolysis of terminal, non-reducing beta-D-glucosyl residues with release of beta-D-glucose.. Its pathway is glycan metabolism; cellulose degradation. Beta-glucosidases are one of a number of cellulolytic enzymes involved in the degradation of cellulosic biomass. Catalyzes the last step releasing glucose from the inhibitory cellobiose. The protein is Probable beta-glucosidase K (bglK) of Aspergillus fumigatus (strain ATCC MYA-4609 / CBS 101355 / FGSC A1100 / Af293) (Neosartorya fumigata).